A 378-amino-acid chain; its full sequence is tRNA (guanine(26)-N(2))-dimethyltransferase (378 aa).

A Trm1 methyltransferase domain is found at 4-374 (KEVTEGKVRI…KGYEEIIRCV (371 aa)). S-adenosyl-L-methionine is bound by residues arginine 44, arginine 69, aspartate 87, aspartate 114, and alanine 115. The Zn(2+) site is built by cysteine 246, cysteine 249, cysteine 263, and cysteine 266.

It belongs to the class I-like SAM-binding methyltransferase superfamily. Trm1 family.

It carries out the reaction guanosine(26) in tRNA + 2 S-adenosyl-L-methionine = N(2)-dimethylguanosine(26) in tRNA + 2 S-adenosyl-L-homocysteine + 2 H(+). In terms of biological role, dimethylates a single guanine residue at position 26 of a number of tRNAs using S-adenosyl-L-methionine as donor of the methyl groups. The polypeptide is tRNA (guanine(26)-N(2))-dimethyltransferase (Saccharolobus islandicus (strain L.S.2.15 / Lassen #1) (Sulfolobus islandicus)).